A 57-amino-acid chain; its full sequence is MAVPKKRTSMSKKRIHKNIWKRKGWRAALKAFALAKSLSTGNSKSFFVRQLNNQTLE.

Belongs to the bacterial ribosomal protein bL32 family.

The protein resides in the plastid. Its subcellular location is the chloroplast. The polypeptide is Large ribosomal subunit protein bL32c (Vitis vinifera (Grape)).